The sequence spans 397 residues: LIM/homeobox protein Lhx9 (397 aa).

LIM zinc-binding domains are found at residues 69-130 (ALCA…RFSV) and 131-193 (QRCA…LLQG). Disordered regions lie at residues 248–272 (ENEADHLDRDQQPYPPSQKTKRMRT), 330–364 (ENGGVDKADGTSLPAPPSADSGALTPPGTATTLTD), and 378–397 (SNMDSHESGSPSQTTLTNLF). Residues 267–326 (TKRMRTSFKHHQLRTMKSYFAINHNPDAKDLKQLAQKTGLTKRVLQVWFQNARAKFRRNL) constitute a DNA-binding region (homeobox). Residues 353–364 (LTPPGTATTLTD) are compositionally biased toward low complexity.

In terms of assembly, interacts with LDB1 and LDB2.

Its subcellular location is the nucleus. Involved in gonadal development. This chain is LIM/homeobox protein Lhx9 (LHX9), found in Homo sapiens (Human).